The sequence spans 254 residues: MASLLKVDPEVKLKVDSFRERITSEAEDLVANFFPKKLLELDGFLKEPILNIHDLTQIHSDMNLPVPDPILLTNSHDGLDGPNMKKRKLEDREETFQGTKVFVMPNGMLKSNQQLVDIIEKVKPEIRLLIEKCNTVKMWVQLLIPRIEDGNNFGVSIQEETVAELRTVESEAASYLDQISRYYITRAKLVSKIAKYPHVEDYRRTVTEIDEKEYISLRLIISELRNQYVTLHDMILKNIEKIKRPRSSNAETLY.

An N6-acetyllysine mark is found at K6 and K14. K195 is modified (N6-acetyllysine; by P300/CBP).

In terms of assembly, homoheptamer. In terms of processing, acetylation at the major site Lys-195 is important for oligomerization and ability to degrade its target substrates. Deacetylated by SIRT1.

In terms of biological role, implicated in immunoproteasome assembly and required for efficient antigen processing. The PA28 activator complex enhances the generation of class I binding peptides by altering the cleavage pattern of the proteasome. The polypeptide is Proteasome activator complex subunit 3 (Gallus gallus (Chicken)).